We begin with the raw amino-acid sequence, 576 residues long: Proline--tRNA ligase (576 aa).

Belongs to the class-II aminoacyl-tRNA synthetase family. ProS type 1 subfamily. As to quaternary structure, homodimer.

It is found in the cytoplasm. The catalysed reaction is tRNA(Pro) + L-proline + ATP = L-prolyl-tRNA(Pro) + AMP + diphosphate. Functionally, catalyzes the attachment of proline to tRNA(Pro) in a two-step reaction: proline is first activated by ATP to form Pro-AMP and then transferred to the acceptor end of tRNA(Pro). As ProRS can inadvertently accommodate and process non-cognate amino acids such as alanine and cysteine, to avoid such errors it has two additional distinct editing activities against alanine. One activity is designated as 'pretransfer' editing and involves the tRNA(Pro)-independent hydrolysis of activated Ala-AMP. The other activity is designated 'posttransfer' editing and involves deacylation of mischarged Ala-tRNA(Pro). The misacylated Cys-tRNA(Pro) is not edited by ProRS. This chain is Proline--tRNA ligase, found in Magnetococcus marinus (strain ATCC BAA-1437 / JCM 17883 / MC-1).